A 238-amino-acid polypeptide reads, in one-letter code: 1-(5-phosphoribosyl)-5-[(5-phosphoribosylamino)methylideneamino] imidazole-4-carboxamide isomerase (238 aa).

Residue Asp8 is the Proton acceptor of the active site. Asp129 (proton donor) is an active-site residue.

It belongs to the HisA/HisF family.

The protein localises to the cytoplasm. The catalysed reaction is 1-(5-phospho-beta-D-ribosyl)-5-[(5-phospho-beta-D-ribosylamino)methylideneamino]imidazole-4-carboxamide = 5-[(5-phospho-1-deoxy-D-ribulos-1-ylimino)methylamino]-1-(5-phospho-beta-D-ribosyl)imidazole-4-carboxamide. It functions in the pathway amino-acid biosynthesis; L-histidine biosynthesis; L-histidine from 5-phospho-alpha-D-ribose 1-diphosphate: step 4/9. This chain is 1-(5-phosphoribosyl)-5-[(5-phosphoribosylamino)methylideneamino] imidazole-4-carboxamide isomerase, found in Clostridium novyi (strain NT).